The following is a 185-amino-acid chain: Ribosome-recycling factor (185 aa).

It belongs to the RRF family.

Its subcellular location is the cytoplasm. Responsible for the release of ribosomes from messenger RNA at the termination of protein biosynthesis. May increase the efficiency of translation by recycling ribosomes from one round of translation to another. This is Ribosome-recycling factor from Carboxydothermus hydrogenoformans (strain ATCC BAA-161 / DSM 6008 / Z-2901).